The following is a 357-amino-acid chain: Arginine kinase (357 aa).

Positions 9 to 91 (KLEAGFKKLQ…FNPIIEDYHE (83 aa)) constitute a Phosphagen kinase N-terminal domain. 64-66 (GVG) is an L-arginine binding site. A Phosphagen kinase C-terminal domain is found at 119-356 (YVVSTHVRCG…LEMIKMEEAA (238 aa)). ATP is bound by residues 122–126 (STHVR) and His185. Residue Glu225 coordinates L-arginine. Arg229 contacts ATP. Position 271 (Cys271) interacts with L-arginine. ATP is bound by residues 280–284 (RASVH) and 309–314 (RGTRGE).

This sequence belongs to the ATP:guanido phosphotransferase family.

It catalyses the reaction L-arginine + ATP = N(omega)-phospho-L-arginine + ADP + H(+). Functionally, catalyzes the reversible transfer of high energy ATP gamma-phosphate group to L-arginine. The sequence is that of Arginine kinase from Polybetes pythagoricus (South American huntsman spider).